The following is a 429-amino-acid chain: Glutamate-1-semialdehyde 2,1-aminomutase 2 (429 aa).

The residue at position 268 (lysine 268) is an N6-(pyridoxal phosphate)lysine.

It belongs to the class-III pyridoxal-phosphate-dependent aminotransferase family. HemL subfamily. In terms of assembly, homodimer. Pyridoxal 5'-phosphate serves as cofactor.

The protein resides in the cytoplasm. The enzyme catalyses (S)-4-amino-5-oxopentanoate = 5-aminolevulinate. It functions in the pathway porphyrin-containing compound metabolism; protoporphyrin-IX biosynthesis; 5-aminolevulinate from L-glutamyl-tRNA(Glu): step 2/2. The sequence is that of Glutamate-1-semialdehyde 2,1-aminomutase 2 from Staphylococcus aureus (strain USA300).